A 312-amino-acid polypeptide reads, in one-letter code: L-type lectin-like domain-containing protein C126.08c (312 aa).

Positions 1 to 22 are cleaved as a signal peptide; the sequence is MFFSVKNVFLLGIFGFVLGALA. Over 23-280 the chain is Extracellular; the sequence is ETSHLERLSL…QKKGSFKKRL (258 aa). In terms of domain architecture, L-type lectin-like spans 24 to 248; sequence TSHLERLSLE…EIASILSRTI (225 aa). A helical membrane pass occupies residues 281 to 301; it reads IILLLSLIVIFSIFALRSYQV. Topologically, residues 302–312 are cytoplasmic; sequence QQEKNRRTTVL.

The protein resides in the membrane. It localises to the endoplasmic reticulum. The protein localises to the golgi apparatus. It is found in the vacuole. This is L-type lectin-like domain-containing protein C126.08c from Schizosaccharomyces pombe (strain 972 / ATCC 24843) (Fission yeast).